A 219-amino-acid polypeptide reads, in one-letter code: Cytidylate kinase (219 aa).

15–23 contacts ATP; it reads GPAASGKGT.

This sequence belongs to the cytidylate kinase family. Type 1 subfamily.

It localises to the cytoplasm. It catalyses the reaction CMP + ATP = CDP + ADP. The catalysed reaction is dCMP + ATP = dCDP + ADP. The protein is Cytidylate kinase of Brucella melitensis biotype 1 (strain ATCC 23456 / CCUG 17765 / NCTC 10094 / 16M).